The following is a 436-amino-acid chain: Antilisterial bacteriocin subtilosin biosynthesis protein AlbD (436 aa).

10 consecutive transmembrane segments (helical) span residues 27–47 (IAAGLVILAVFEIGLIRQAGI), 55–75 (TYIILALLLMNTYMVFLSVTS), 113–133 (LFFFILPLFLFGNGTLSGAQT), 134–154 (LFWLGRFSFFTVYSIIFGVVL), 164–184 (LMFLLHAAIFACVCISAALMP), 187–207 (TIPLCAVHILWAVVIDFPVFL), 240–260 (AMLLNYAVMAVFSGFFSFQMM), 270–290 (IYIVISALLLICSPIALLYSI), 315–335 (FYSGLLAGGFLLVVMIVGFIS), and 395–415 (AILAGTAVSLAVIPIAGLVIV).

It is found in the cell membrane. Involved in the production of the bacteriocin subtilosin. Required for immunity to subtilosin. The protein is Antilisterial bacteriocin subtilosin biosynthesis protein AlbD (albD) of Bacillus subtilis (strain 168).